The primary structure comprises 359 residues: Peptide chain release factor 1 (359 aa).

An N5-methylglutamine modification is found at glutamine 235.

The protein belongs to the prokaryotic/mitochondrial release factor family. Methylated by PrmC. Methylation increases the termination efficiency of RF1.

It localises to the cytoplasm. Peptide chain release factor 1 directs the termination of translation in response to the peptide chain termination codons UAG and UAA. This is Peptide chain release factor 1 from Anaplasma phagocytophilum (strain HZ).